The sequence spans 432 residues: Probable protein phosphatase 2C 75 (432 aa).

One can recognise a PPM-type phosphatase domain in the interval V44–L356. 4 residues coordinate Mn(2+): D80, G81, D301, and D347. The interval S372 to S408 is disordered.

The protein belongs to the PP2C family. Mg(2+) serves as cofactor. The cofactor is Mn(2+).

The enzyme catalyses O-phospho-L-seryl-[protein] + H2O = L-seryl-[protein] + phosphate. It carries out the reaction O-phospho-L-threonyl-[protein] + H2O = L-threonyl-[protein] + phosphate. The chain is Probable protein phosphatase 2C 75 from Oryza sativa subsp. japonica (Rice).